The sequence spans 414 residues: Imidazolonepropionase (414 aa).

Residues H73 and H75 each coordinate Fe(3+). 2 residues coordinate Zn(2+): H73 and H75. Positions 82, 145, and 178 each coordinate 4-imidazolone-5-propanoate. Residue Y145 coordinates N-formimidoyl-L-glutamate. H249 contacts Fe(3+). H249 contacts Zn(2+). Q252 lines the 4-imidazolone-5-propanoate pocket. Fe(3+) is bound at residue D324. D324 contributes to the Zn(2+) binding site. N-formimidoyl-L-glutamate contacts are provided by N326 and G328. S329 is a 4-imidazolone-5-propanoate binding site.

The protein belongs to the metallo-dependent hydrolases superfamily. HutI family. Zn(2+) is required as a cofactor. Requires Fe(3+) as cofactor.

The protein resides in the cytoplasm. It catalyses the reaction 4-imidazolone-5-propanoate + H2O = N-formimidoyl-L-glutamate. It functions in the pathway amino-acid degradation; L-histidine degradation into L-glutamate; N-formimidoyl-L-glutamate from L-histidine: step 3/3. In terms of biological role, catalyzes the hydrolytic cleavage of the carbon-nitrogen bond in imidazolone-5-propanoate to yield N-formimidoyl-L-glutamate. It is the third step in the universal histidine degradation pathway. This Shewanella pealeana (strain ATCC 700345 / ANG-SQ1) protein is Imidazolonepropionase.